Here is a 141-residue protein sequence, read N- to C-terminus: Galactose-6-phosphate isomerase subunit LacA (141 aa).

The protein belongs to the LacAB/RpiB family. In terms of assembly, heteromultimeric protein consisting of LacA and LacB.

It catalyses the reaction aldehydo-D-galactose 6-phosphate = keto-D-tagatose 6-phosphate. Its pathway is carbohydrate metabolism; D-galactose 6-phosphate degradation; D-tagatose 6-phosphate from D-galactose 6-phosphate: step 1/1. The polypeptide is Galactose-6-phosphate isomerase subunit LacA (Streptococcus pneumoniae (strain ATCC 700669 / Spain 23F-1)).